The following is a 388-amino-acid chain: Na(+)/H(+) antiporter NhaA (388 aa).

Over 1 to 11 the chain is Cytoplasmic; it reads MKHLHRFFSSD. The chain crosses the membrane as a helical span at residues 12 to 31; sequence ASGGIILIIAAVLAMIMANS. Residues 32-58 lie on the Periplasmic side of the membrane; that stretch reads GATSGWYHDFLETPVQLRVGTLEINKN. The chain crosses the membrane as a helical span at residues 59–80; the sequence is MLLWINDALMAVFFLLVGLEVK. Over 81-96 the chain is Cytoplasmic; sequence RELMQGSLASLRQAAF. A helical membrane pass occupies residues 97-116; the sequence is PVIAAIGGMIVPALLYLAFN. Residues 117–122 are Periplasmic-facing; it reads YADPIT. The chain crosses the membrane as a helical span at residues 123 to 130; that stretch reads REGWAIPA. At 131-154 the chain is on the cytoplasmic side; sequence ATDIAFALGVLALLGSRVPLALKI. The chain crosses the membrane as a helical span at residues 155–176; sequence FLMALAIIDDLGAIIIIALFYT. Over 177–180 the chain is Periplasmic; the sequence is NDLS. The helical transmembrane segment at 181 to 200 threads the bilayer; that stretch reads MASLGVAAVAIAVLVVLNLC. The Cytoplasmic segment spans residues 201-204; it reads GVRR. The chain crosses the membrane as a helical span at residues 205 to 222; it reads TGVYILVGVVLWTAVLKS. Position 223 (Gly-223) is a topological domain, periplasmic. Residues 224-236 traverse the membrane as a helical segment; that stretch reads VHATLAGVIVGFF. Residues 237 to 253 are Cytoplasmic-facing; sequence IPLKEKHGRSPAKRLEH. The chain crosses the membrane as a helical span at residues 254 to 272; sequence VLHPWVAYLILPLFAFANA. Residues 273 to 286 are Periplasmic-facing; it reads GVSLQGVTLEGLTS. A helical membrane pass occupies residues 287–310; the sequence is ILPLGIIAGLLIGKPLGISLFCWL. Over 311 to 339 the chain is Cytoplasmic; sequence ALRLKLAHLPEGTTYQQIMAVGILCGIGF. The chain crosses the membrane as a helical span at residues 340-350; sequence TMSIFIASLAF. Residues 351–357 lie on the Periplasmic side of the membrane; that stretch reads GSVDPEL. A helical transmembrane segment spans residues 358–380; the sequence is INWAKLGILVGSISSAVIGYSWL. The Cytoplasmic segment spans residues 381 to 388; that stretch reads RVRLRPSV.

The protein belongs to the NhaA Na(+)/H(+) (TC 2.A.33) antiporter family.

It is found in the cell inner membrane. The enzyme catalyses Na(+)(in) + 2 H(+)(out) = Na(+)(out) + 2 H(+)(in). Na(+)/H(+) antiporter that extrudes sodium in exchange for external protons. The polypeptide is Na(+)/H(+) antiporter NhaA (Escherichia coli O1:K1 / APEC).